The sequence spans 477 residues: Protein nucleotidyltransferase YdiU (477 aa).

Residues G89, G91, R92, K112, D124, G125, R178, and R185 each contribute to the ATP site. Catalysis depends on D257, which acts as the Proton acceptor. Residues N258 and D267 each coordinate Mg(2+). D267 contributes to the ATP binding site.

The protein belongs to the SELO family. It depends on Mg(2+) as a cofactor. Requires Mn(2+) as cofactor.

The catalysed reaction is L-seryl-[protein] + ATP = 3-O-(5'-adenylyl)-L-seryl-[protein] + diphosphate. The enzyme catalyses L-threonyl-[protein] + ATP = 3-O-(5'-adenylyl)-L-threonyl-[protein] + diphosphate. It catalyses the reaction L-tyrosyl-[protein] + ATP = O-(5'-adenylyl)-L-tyrosyl-[protein] + diphosphate. It carries out the reaction L-histidyl-[protein] + UTP = N(tele)-(5'-uridylyl)-L-histidyl-[protein] + diphosphate. The catalysed reaction is L-seryl-[protein] + UTP = O-(5'-uridylyl)-L-seryl-[protein] + diphosphate. The enzyme catalyses L-tyrosyl-[protein] + UTP = O-(5'-uridylyl)-L-tyrosyl-[protein] + diphosphate. Functionally, nucleotidyltransferase involved in the post-translational modification of proteins. It can catalyze the addition of adenosine monophosphate (AMP) or uridine monophosphate (UMP) to a protein, resulting in modifications known as AMPylation and UMPylation. The chain is Protein nucleotidyltransferase YdiU from Synechocystis sp. (strain ATCC 27184 / PCC 6803 / Kazusa).